The following is a 217-amino-acid chain: 3,4-dihydroxy-2-butanone 4-phosphate synthase (217 aa).

Residues 37 to 38 (RE), D42, 150 to 154 (RRGHT), and E174 contribute to the D-ribulose 5-phosphate site. Mg(2+) is bound at residue E38. H153 contacts Mg(2+).

It belongs to the DHBP synthase family. Homodimer. Mg(2+) serves as cofactor. Mn(2+) is required as a cofactor.

It catalyses the reaction D-ribulose 5-phosphate = (2S)-2-hydroxy-3-oxobutyl phosphate + formate + H(+). The protein operates within cofactor biosynthesis; riboflavin biosynthesis; 2-hydroxy-3-oxobutyl phosphate from D-ribulose 5-phosphate: step 1/1. Catalyzes the conversion of D-ribulose 5-phosphate to formate and 3,4-dihydroxy-2-butanone 4-phosphate. The protein is 3,4-dihydroxy-2-butanone 4-phosphate synthase of Shewanella loihica (strain ATCC BAA-1088 / PV-4).